The following is a 717-amino-acid chain: Polyribonucleotide nucleotidyltransferase (717 aa).

Positions 488 and 494 each coordinate Mg(2+). The region spanning 555–614 (PRIEVMNIPVDKIREVIGSGGKVIREIVEKTGAKINIDDDGTVKIASASAKEIEAARKWI) is the KH domain. Positions 624–692 (GQVYEGTVVK…ERGKVRLSMK (69 aa)) constitute an S1 motif domain.

This sequence belongs to the polyribonucleotide nucleotidyltransferase family. Mg(2+) serves as cofactor.

The protein resides in the cytoplasm. The catalysed reaction is RNA(n+1) + phosphate = RNA(n) + a ribonucleoside 5'-diphosphate. Involved in mRNA degradation. Catalyzes the phosphorolysis of single-stranded polyribonucleotides processively in the 3'- to 5'-direction. This chain is Polyribonucleotide nucleotidyltransferase, found in Rhizobium meliloti (strain 1021) (Ensifer meliloti).